Here is a 319-residue protein sequence, read N- to C-terminus: Ribonucleoside-diphosphate reductase 2 subunit beta (319 aa).

Positions 67, 98, and 101 each coordinate Fe cation. Tyr-105 is a catalytic residue. The Fe cation site is built by Glu-158, Glu-192, and His-195.

Belongs to the ribonucleoside diphosphate reductase small chain family. Tetramer of two alpha and two beta subunits. The cofactor is Fe cation.

It catalyses the reaction a 2'-deoxyribonucleoside 5'-diphosphate + [thioredoxin]-disulfide + H2O = a ribonucleoside 5'-diphosphate + [thioredoxin]-dithiol. Functionally, provides the precursors necessary for DNA synthesis. Catalyzes the biosynthesis of deoxyribonucleotides from the corresponding ribonucleotides. R2F contains the tyrosyl radical required for catalysis. The sequence is that of Ribonucleoside-diphosphate reductase 2 subunit beta (nrdF) from Escherichia coli (strain K12).